Here is a 557-residue protein sequence, read N- to C-terminus: Formate--tetrahydrofolate ligase (557 aa).

65-72 (TPAGEGKT) lines the ATP pocket.

This sequence belongs to the formate--tetrahydrofolate ligase family.

It catalyses the reaction (6S)-5,6,7,8-tetrahydrofolate + formate + ATP = (6R)-10-formyltetrahydrofolate + ADP + phosphate. Its pathway is one-carbon metabolism; tetrahydrofolate interconversion. In Acidiphilium cryptum (strain JF-5), this protein is Formate--tetrahydrofolate ligase.